The chain runs to 299 residues: ATP phosphoribosyltransferase (299 aa).

It belongs to the ATP phosphoribosyltransferase family. Long subfamily. As to quaternary structure, equilibrium between an active dimeric form, an inactive hexameric form and higher aggregates. Interconversion between the various forms is largely reversible and is influenced by the natural substrates and inhibitors of the enzyme. The cofactor is Mg(2+).

Its subcellular location is the cytoplasm. It catalyses the reaction 1-(5-phospho-beta-D-ribosyl)-ATP + diphosphate = 5-phospho-alpha-D-ribose 1-diphosphate + ATP. The protein operates within amino-acid biosynthesis; L-histidine biosynthesis; L-histidine from 5-phospho-alpha-D-ribose 1-diphosphate: step 1/9. Its activity is regulated as follows. Feedback inhibited by histidine. Catalyzes the condensation of ATP and 5-phosphoribose 1-diphosphate to form N'-(5'-phosphoribosyl)-ATP (PR-ATP). Has a crucial role in the pathway because the rate of histidine biosynthesis seems to be controlled primarily by regulation of HisG enzymatic activity. This is ATP phosphoribosyltransferase from Buchnera aphidicola subsp. Melaphis rhois.